Here is a 71-residue protein sequence, read N- to C-terminus: Small ribosomal subunit protein bS18 (71 aa).

This sequence belongs to the bacterial ribosomal protein bS18 family. In terms of assembly, part of the 30S ribosomal subunit. Forms a tight heterodimer with protein bS6.

Its function is as follows. Binds as a heterodimer with protein bS6 to the central domain of the 16S rRNA, where it helps stabilize the platform of the 30S subunit. The polypeptide is Small ribosomal subunit protein bS18 (Synechococcus sp. (strain JA-2-3B'a(2-13)) (Cyanobacteria bacterium Yellowstone B-Prime)).